The chain runs to 90 residues: MNKTQLIDFIAEKADLTKVQAKAALEATLGAVEGALKDGDQVQLIGFGTFKVNHRSARTGRNPKTGEEIKIAAANVPAFVAGKALKDAIK.

It belongs to the bacterial histone-like protein family. As to quaternary structure, heterodimer of an alpha and a beta chain.

Functionally, histone-like DNA-binding protein which is capable of wrapping DNA to stabilize it, and thus to prevent its denaturation under extreme environmental conditions. The polypeptide is DNA-binding protein HU-alpha (hupA) (Vibrio cholerae serotype O1 (strain ATCC 39315 / El Tor Inaba N16961)).